The following is a 138-amino-acid chain: Ergosterol biosynthetic protein 28 (138 aa).

The helical transmembrane segment at 17–33 (LPYWLLFISVVSIFNSV) threads the bilayer. N-linked (GlcNAc...) asparagine glycosylation occurs at asparagine 40. The next 3 membrane-spanning stretches (helical) occupy residues 56–75 (LSAR…RFYG), 87–107 (LTQF…LYFG), and 114–131 (GLSG…WMYL).

The protein belongs to the ERG28 family. In terms of assembly, heterotetramer of ERG25, ERG26, ERG27 and ERG28. ERG28 acts as a scaffold to tether ERG27 and other 4,4-demethylation-related enzymes, forming a demethylation enzyme complex, in the endoplasmic reticulum. Interacts with ERG25, ERG26 and ERG27. Also interacts with ERG1, ERG3, ERG5, ERG6 and ERG11.

It is found in the endoplasmic reticulum membrane. Part of the third module of ergosterol biosynthesis pathway that includes the late steps of the pathway. ERG28 has a role as a scaffold to help anchor the catalytic components of the C-4 demethylation complex ERG25, ERG26 and ERG27 to the endoplasmic reticulum. The third module or late pathway involves the ergosterol synthesis itself through consecutive reactions that mainly occur in the endoplasmic reticulum (ER) membrane. Firstly, the squalene synthase ERG9 catalyzes the condensation of 2 farnesyl pyrophosphate moieties to form squalene, which is the precursor of all steroids. Squalene synthase is crucial for balancing the incorporation of farnesyl diphosphate (FPP) into sterol and nonsterol isoprene synthesis. Secondly, the squalene epoxidase ERG1 catalyzes the stereospecific oxidation of squalene to (S)-2,3-epoxysqualene, which is considered to be a rate-limiting enzyme in steroid biosynthesis. Then, the lanosterol synthase ERG7 catalyzes the cyclization of (S)-2,3 oxidosqualene to lanosterol, a reaction that forms the sterol core. In the next steps, lanosterol is transformed to zymosterol through a complex process involving various demethylation, reduction and desaturation reactions. The lanosterol 14-alpha-demethylase ERG11 (also known as CYP51) catalyzes C14-demethylation of lanosterol to produce 4,4'-dimethyl cholesta-8,14,24-triene-3-beta-ol, which is critical for ergosterol biosynthesis. The C-14 reductase ERG24 reduces the C14=C15 double bond of 4,4-dimethyl-cholesta-8,14,24-trienol to produce 4,4-dimethyl-cholesta-8,24-dienol. 4,4-dimethyl-cholesta-8,24-dienol is substrate of the C-4 demethylation complex ERG25-ERG26-ERG27 in which ERG25 catalyzes the three-step monooxygenation required for the demethylation of 4,4-dimethyl and 4alpha-methylsterols, ERG26 catalyzes the oxidative decarboxylation that results in a reduction of the 3-beta-hydroxy group at the C-3 carbon to an oxo group, and ERG27 is responsible for the reduction of the keto group on the C-3. ERG28 has a role as a scaffold to help anchor ERG25, ERG26 and ERG27 to the endoplasmic reticulum and ERG29 regulates the activity of the iron-containing C4-methylsterol oxidase ERG25. Then, the sterol 24-C-methyltransferase ERG6 catalyzes the methyl transfer from S-adenosyl-methionine to the C-24 of zymosterol to form fecosterol. The C-8 sterol isomerase ERG2 catalyzes the reaction which results in unsaturation at C-7 in the B ring of sterols and thus converts fecosterol to episterol. The sterol-C5-desaturase ERG3 then catalyzes the introduction of a C-5 double bond in the B ring to produce 5-dehydroepisterol. The C-22 sterol desaturase ERG5 further converts 5-dehydroepisterol into ergosta-5,7,22,24(28)-tetraen-3beta-ol by forming the C-22(23) double bond in the sterol side chain. Finally, ergosta-5,7,22,24(28)-tetraen-3beta-ol is substrate of the C-24(28) sterol reductase ERG4 to produce ergosterol. The sequence is that of Ergosterol biosynthetic protein 28 from Candida albicans (strain SC5314 / ATCC MYA-2876) (Yeast).